The chain runs to 236 residues: Alanyl-tRNA editing protein AlaX-M (236 aa).

Residues His101, His105, and His205 each contribute to the Zn(2+) site.

Belongs to the class-II aminoacyl-tRNA synthetase family. Editing domain AlaX-M subfamily. Zn(2+) is required as a cofactor.

The protein resides in the cytoplasm. Functionally, functions in trans to edit the amino acid moiety from incorrectly charged Ser-tRNA(Ala). This Saccharolobus solfataricus (strain ATCC 35092 / DSM 1617 / JCM 11322 / P2) (Sulfolobus solfataricus) protein is Alanyl-tRNA editing protein AlaX-M (alaXM).